We begin with the raw amino-acid sequence, 396 residues long: S-adenosylmethionine synthase 2 (396 aa).

Glu-13 is a binding site for Mg(2+). His-19 is an ATP binding site. Glu-47 contributes to the K(+) binding site. Residues Glu-60 and Gln-103 each contribute to the L-methionine site. ATP contacts are provided by residues 171–173 (DGK), 239–242 (SGRF), Asp-250, 256–257 (RK), Ala-273, Lys-277, and Lys-281. Asp-250 provides a ligand contact to L-methionine. Lys-281 contacts L-methionine.

The protein belongs to the AdoMet synthase family. As to quaternary structure, homotetramer. Mn(2+) serves as cofactor. Requires Mg(2+) as cofactor. It depends on Co(2+) as a cofactor. K(+) is required as a cofactor. In terms of tissue distribution, expressed in roots, stems and leaves (at protein level).

Its subcellular location is the cytoplasm. The enzyme catalyses L-methionine + ATP + H2O = S-adenosyl-L-methionine + phosphate + diphosphate. It functions in the pathway amino-acid biosynthesis; S-adenosyl-L-methionine biosynthesis; S-adenosyl-L-methionine from L-methionine: step 1/1. Its function is as follows. Catalyzes the formation of S-adenosylmethionine from methionine and ATP. The reaction comprises two steps that are both catalyzed by the same enzyme: formation of S-adenosylmethionine (AdoMet) and triphosphate, and subsequent hydrolysis of the triphosphate. May be involved in the synthesis of betain in response to abiotic stress such as high salinity. The sequence is that of S-adenosylmethionine synthase 2 (SAMS2) from Atriplex nummularia (Old man saltbush).